The sequence spans 710 residues: Polyribonucleotide nucleotidyltransferase (710 aa).

Mg(2+) contacts are provided by Asp-486 and Asp-492. One can recognise a KH domain in the interval 553–612 (PRIHTIKISVDKIKDVIGKGGSVIRALTEETGTTIEIEDDGTVKIAATDGDKAKFAIRRI). The region spanning 622–690 (GRIYNGKVTR…RQGRVRLSIK (69 aa)) is the S1 motif domain. A disordered region spans residues 690–710 (KEAGEQAQPEAEAVPAAPEAE). A compositionally biased stretch (low complexity) spans 694-710 (EQAQPEAEAVPAAPEAE).

The protein belongs to the polyribonucleotide nucleotidyltransferase family. In terms of assembly, component of the RNA degradosome, which is a multiprotein complex involved in RNA processing and mRNA degradation. Requires Mg(2+) as cofactor.

It localises to the cytoplasm. The enzyme catalyses RNA(n+1) + phosphate = RNA(n) + a ribonucleoside 5'-diphosphate. In terms of biological role, involved in mRNA degradation. Catalyzes the phosphorolysis of single-stranded polyribonucleotides processively in the 3'- to 5'-direction. The chain is Polyribonucleotide nucleotidyltransferase from Erwinia tasmaniensis (strain DSM 17950 / CFBP 7177 / CIP 109463 / NCPPB 4357 / Et1/99).